The following is a 155-amino-acid chain: Protein SprT-like (155 aa).

The region spanning 6–148 (LQRLVERVSL…VCGQCGGKLM (143 aa)) is the SprT-like domain. H67 contacts Zn(2+). Residue E68 is part of the active site. Zn(2+) is bound at residue H71.

Belongs to the SprT family. The cofactor is Zn(2+).

The protein localises to the cytoplasm. This Geobacillus sp. (strain WCH70) protein is Protein SprT-like.